We begin with the raw amino-acid sequence, 278 residues long: Urease accessory protein UreD (278 aa).

This sequence belongs to the UreD family. As to quaternary structure, ureD, UreF and UreG form a complex that acts as a GTP-hydrolysis-dependent molecular chaperone, activating the urease apoprotein by helping to assemble the nickel containing metallocenter of UreC. The UreE protein probably delivers the nickel.

Its subcellular location is the cytoplasm. In terms of biological role, required for maturation of urease via the functional incorporation of the urease nickel metallocenter. This Deinococcus radiodurans (strain ATCC 13939 / DSM 20539 / JCM 16871 / CCUG 27074 / LMG 4051 / NBRC 15346 / NCIMB 9279 / VKM B-1422 / R1) protein is Urease accessory protein UreD.